Reading from the N-terminus, the 179-residue chain is Inner membrane-spanning protein YciB (179 aa).

Helical transmembrane passes span 22-42 (IYAA…YSWV), 50-70 (MALI…FFHN), 76-96 (WKVT…QWVM), 121-141 (LAWA…AFWL), and 149-169 (FKVF…GIYI).

The protein belongs to the YciB family.

The protein resides in the cell inner membrane. Its function is as follows. Plays a role in cell envelope biogenesis, maintenance of cell envelope integrity and membrane homeostasis. This Escherichia coli O127:H6 (strain E2348/69 / EPEC) protein is Inner membrane-spanning protein YciB.